Reading from the N-terminus, the 240-residue chain is Ribosomal RNA small subunit methyltransferase G (240 aa).

S-adenosyl-L-methionine-binding positions include glycine 79, 130 to 131, and arginine 149; that span reads AE.

It belongs to the methyltransferase superfamily. RNA methyltransferase RsmG family.

The protein resides in the cytoplasm. Its function is as follows. Specifically methylates the N7 position of a guanine in 16S rRNA. The sequence is that of Ribosomal RNA small subunit methyltransferase G from Moorella thermoacetica (strain ATCC 39073 / JCM 9320).